Here is a 284-residue protein sequence, read N- to C-terminus: RNase adapter protein RapZ (284 aa).

An ATP-binding site is contributed by Gly8 to Ser15. Asp56–Asn59 contacts GTP. The segment at Arg266 to Thr284 is RNA-binding.

Belongs to the RapZ-like family. RapZ subfamily. As to quaternary structure, homotrimer.

In terms of biological role, modulates the synthesis of GlmS, by affecting the processing and stability of the regulatory small RNA GlmZ. When glucosamine-6-phosphate (GlcN6P) concentrations are high in the cell, RapZ binds GlmZ and targets it to cleavage by RNase E. Consequently, GlmZ is inactivated and unable to activate GlmS synthesis. Under low GlcN6P concentrations, RapZ is sequestered and inactivated by an other regulatory small RNA, GlmY, preventing GlmZ degradation and leading to synthesis of GlmS. The sequence is that of RNase adapter protein RapZ from Salmonella typhimurium (strain LT2 / SGSC1412 / ATCC 700720).